A 217-amino-acid chain; its full sequence is GTP-binding protein Rit2 (217 aa).

Residues 27–34 (GAGGVGKS), 74–78 (DTAGQ), and 133–136 (NKID) contribute to the GTP site.

The protein belongs to the small GTPase superfamily. Ras family. As to quaternary structure, interacts with AFDN, the C-terminal domain of RALGDS and RLF, but not with RIN1 and PIK3CA. RLF binds exclusively to the active GTP-bound form. Binds calmodulin. Interacts with PLXNB3.

It is found in the nucleus. The protein localises to the cell membrane. The catalysed reaction is GTP + H2O = GDP + phosphate + H(+). Its activity is regulated as follows. Alternates between an inactive form bound to GDP and an active form bound to GTP. Functionally, binds and exchanges GTP and GDP. This chain is GTP-binding protein Rit2 (Rit2), found in Rattus norvegicus (Rat).